Consider the following 441-residue polypeptide: MNETDTLFAPASGFGRAAVAVIRISGPAAGGVLATLGGRLPTPRRLSLRSLRDPRDGTELDRALVAWFPGPDTYSGEDMAELHLHGGAAVRMRVLATLARLPGCRAAEPGAFTRRAVLNGRMDLAEAEAVADLIDAETEGQRRQALRQLDGALSRQVAAWRAEAIDCLAAAEAALDFADEGDVDDAGLDAALFDRAARLRDAVAATLRDGHRGERLREGFTVVLAGAPNSGKSTLLNALSRRDVAIVSDSPGTTRDAIEVRLDLGGLPVLLVDTAGLRETAEPIEAQGIVRTRARIDTADLVVALVPPGGAVPDLGPGCRPILIVRTKADLFAGSQPAGDSADVTVSAHTGAGMDDLLDAIQAAAEDGLGTGDALITRARHRAALEACVAHLDRVSGSAGGLPELAAEDLRLAVRALGEVAGHVGVEDVLDRLFSGFCIGK.

(6S)-5-formyl-5,6,7,8-tetrahydrofolate is bound by residues Arg23, Glu81, and Arg121. One can recognise a TrmE-type G domain in the interval 219-366 (GFTVVLAGAP…LLDAIQAAAE (148 aa)). Residues 229-234 (NSGKST), 248-254 (SDSPGTT), and 273-276 (DTAG) contribute to the GTP site. Ser233 and Thr254 together coordinate Mg(2+). Lys441 is a binding site for (6S)-5-formyl-5,6,7,8-tetrahydrofolate.

It belongs to the TRAFAC class TrmE-Era-EngA-EngB-Septin-like GTPase superfamily. TrmE GTPase family. Homodimer. Heterotetramer of two MnmE and two MnmG subunits. Requires K(+) as cofactor.

The protein resides in the cytoplasm. Exhibits a very high intrinsic GTPase hydrolysis rate. Involved in the addition of a carboxymethylaminomethyl (cmnm) group at the wobble position (U34) of certain tRNAs, forming tRNA-cmnm(5)s(2)U34. The polypeptide is tRNA modification GTPase MnmE (Methylobacterium radiotolerans (strain ATCC 27329 / DSM 1819 / JCM 2831 / NBRC 15690 / NCIMB 10815 / 0-1)).